The primary structure comprises 1580 residues: MHSSLEPEKMEEGGGSNSLKRKFSEIDGDQNLDSVSSPMMTDSNGSYELKVYEVAKNRNIIAVLGTGIDKSEITKRLIKAMGSSDTDKRLIIFLAPTVNLVKQQCCEIRALVNLKVEEYFGAKGVDKWTSQRWDEEFSKHDVLVMTPQILLDVLRSAFLKLEMVCLLIIDECHHTTGNHPYAKLMKEFYHESTSKPKIFGLTASAVIRKGIVSSPSNYAAQVSELERLMDSKIFNPEEREGVEKFATTVKEGPILYNPSPSCSLELKEKLETSHLKFDASLRRLQELGKDSFLNMDNKFETYQKRLSIDYREILHCLDNLGLICAHLAAEVCLEKISDTKEESETYKECSMVCKEFLEDILSTIGVYLPQDDKSLVDLQQNHLSAVISGHVSPKLKELFHLLDSFRGDKQKQCLILVERIITAKVIERFVKKEASLAYLNVLYLTENNPSTNVSAQKMQIEIPDLFQHGKVNLLFITDVVEEGFQVPDCSCMVCFDLPKTMCSYSQSQKHAKQSNSKSIMFLERGNPKQRDHLHDLMRREVLIQDPEAPNLKSCPPPVKNGHGVKEIGSMVIPDSNITVSEEAASTQTMSDPPSRNEQLPPCKKLRLDNNLLQSNGKEKVASSKSKSSSSAAGSKKRKELHGTTCANALSGTWGENIDGATFQAYKFDFCCNISGEVYSSFSLLLESTLAEDVGKVEMDLYLVRKLVKASVSPCGQIRLSQEELVKAKYFQQFFFNGMFGKLFVGSKSQGTKREFLLQTDTSSLWHPAFMFLLLPVETNDLASSATIDWSAINSCASIVEFLKKNSLLDLRDSDGNQCNTSSGQEVLLDDKMEETNLIHFANASSDKNSLEELVVIAIHTGRIYSIVEAVSDSSAMSPFEVDASSGYATYAEYFNKKYGIVLAHPNQPLMKLKQSHHAHNLLVDFNEEMVVKTEPKAGNVRKRKPNIHAHLPPELLARIDVPRAVLKSIYLLPSVMHRLESLMLASQLREEIDCSIDNFSISSTSILEAVTTLTCPESFSMERLELLGDSVLKYVASCHLFLKYPDKDEGQLSRQRQSIISNSNLHRLTTSRKLQGYIRNGAFEPRRWTAPGQFSLFPVPCKCGIDTREVPLDPKFFTENMTIKIGKSCDMGHRWVVSKSVSDCAEALIGAYYVSGGLSASLHMMKWLGIDVDFDPNLVVEAINRVSLRCYIPKEDELIELERKIQHEFSAKFLLKEAITHSSLRESYSYERLEFLGDSVLDFLITRHLFNTYEQTGPGEMTDLRSACVNNENFAQVAVKNNLHTHLQRCATVLETQINDYLMSFQKPDETGRSIPSIQGPKALGDVVESIAGALLIDTRLDLDQVWRVFEPLLSPLVTPDKLQLPPYRELNELCDSLGYFFRVKCSNDGVKAQATIQLQLDDVLLTGDGSEQTNKLALGKAASHLLTQLEKRNISRKTSLGDNQSSMDVNLACNHSDRETLTSETTEIQSIVIPFIGPINMKKGGPRGTLHEFCKKHLWPMPTFDTSEEKSRTPFEFIDGGEKRTSFSSFTSTITLRIPNREAVMYAGEARPDKKSSFDSAVVELLYELERRKIVIIQK.

The span at 1–12 shows a compositional bias: basic and acidic residues; it reads MHSSLEPEKMEE. The segment at 1–22 is disordered; sequence MHSSLEPEKMEEGGGSNSLKRK. The region spanning 51–223 is the Helicase ATP-binding domain; the sequence is VYEVAKNRNI…SPSNYAAQVS (173 aa). An ATP-binding site is contributed by 64-71; sequence LGTGIDKS. The DECH box signature appears at 170-173; the sequence is DECH. The 169-residue stretch at 394–562 folds into the Helicase C-terminal domain; that stretch reads KLKELFHLLD…SCPPPVKNGH (169 aa). Polar residues predominate over residues 581-597; sequence EEAASTQTMSDPPSRNE. 2 disordered regions span residues 581–601 and 613–638; these read EEAA…QLPP and QSNG…KKRK. Low complexity predominate over residues 622-633; sequence SSKSKSSSSAAG. Residues 836–960 form the PAZ domain; the sequence is NLIHFANASS…LPPELLARID (125 aa). RNase III domains lie at 985–1157 and 1198–1340; these read ASQL…VSGG and LIEL…IDTR. Residues glutamate 1234, aspartate 1326, and glutamate 1329 each contribute to the Mg(2+) site.

It belongs to the helicase family. Dicer subfamily. As to quaternary structure, interacts with DRB2 and DRB5. Requires Mg(2+) as cofactor. The cofactor is Mn(2+).

Its subcellular location is the nucleus. It localises to the nucleolus. Ribonuclease (RNase) III involved in RNA-mediated post-transcriptional gene silencing (PTGS). Involved in the processing of repeat-associated small interfering RNAs (ra-siRNAs, derived from heterochromatin and DNA repeats such as transposons) by cleaving small dsRNAs into 24 nucleotide ra-siRNAs. Plays a role in antiviral RNA silencing. Involved in the production of viral siRNAs derived from the cabbage leaf curl virus (CaLCuV) and tobacco rattle virus (TRV). Targeted by the viral silencing suppressor (VSR) protein 2b of the cucumber mosaic virus (CMV) that inactivates DCL3 function in RNA silencing. Acts redundantly with DICER-LIKE 1 (DCL1) to promote flowering via repression of FLOWERING LOCUS C (FLC). Does not seem to be involved in microRNAs (miRNAs) processing. This Arabidopsis thaliana (Mouse-ear cress) protein is Endoribonuclease Dicer homolog 3 (DCL3).